Reading from the N-terminus, the 477-residue chain is Regulator of G-protein signaling 7 (477 aa).

The DEP domain maps to 37–112 (EKNGIPIRTV…DDGTFYRFQT (76 aa)). Residues Ser-229 and Ser-241 each carry the phosphoserine modification. The interval 236–257 (DIRSHSPTHTPTPETKPPTEDE) is disordered. The residue at position 243 (Thr-243) is a Phosphothreonine. Positions 255-316 (EDELHRQIKY…LSDDTTFWEL (62 aa)) constitute a G protein gamma domain. An RGS domain is found at 333–448 (GMDEALKDPV…IRSSAYQELL (116 aa)). Phosphoserine is present on Ser-434.

As to quaternary structure, interacts with GNB5, forming the RGS7-GNB5 complex. Interacts with GPR158; promotes the GTPase activator activity of the RGS7-GNB5 complex in absence of glycine, in contrast GTPase activator activity of the RGS7-GNB5 complex is inhibited in presence of glycine. Interacts with GPR179. Interacts with PKD1; this prevents rapid proteasomal degradation. Interacts with RGS7BP, leading to regulate the subcellular location of the heterodimer formed with GNB5. Interacts (phosphorylated form) with 14-3-3 protein YWHAQ. Interacts with SNAPIN. Interacts with GNAI1. Interacts with GNAO1, GNAI3 and GNAZ. Post-translationally, palmitoylated. In terms of processing, ubiquitinated, leading to rapid proteasomal degradation. Phosphorylation and subsequent interaction with 14-3-3 proteins inhibits GAP activity. Brain-specific. Predominantly cerebellar granule cells.

The protein localises to the cytoplasm. It is found in the cytosol. The protein resides in the cell membrane. Its subcellular location is the membrane. Its function is as follows. GTPase activator component of the RGS7-GNB5 complex that regulates G protein-coupled receptor signaling cascades. The RGS7-GNB5 complex acts as an inhibitor signal transduction by promoting the GTPase activity of G protein alpha subunits, such as GNAO1, thereby driving them into their inactive GDP-bound form. May play a role in synaptic vesicle exocytosis. Glycine-dependent regulation of the RGS7-GNB5 complex by GPR158 affects mood and cognition via its ability to regulate neuronal excitability in L2/L3 pyramidal neurons of the prefrontal cortex. Modulates the activity of potassium channels that are activated by GNAO1 in response to muscarinic acetylcholine receptor M2/CHRM2 signaling. This is Regulator of G-protein signaling 7 (Rgs7) from Rattus norvegicus (Rat).